A 165-amino-acid polypeptide reads, in one-letter code: (2E)-enoyl-[ACP] glycyltransferase (165 aa).

It belongs to the FcoT family.

It catalyses the reaction a (3R)-3-[(carboxymethyl)amino]fatty acid + holo-[ACP] + H(+) = a (2E)-enoyl-[ACP] + glycine + H2O. It carries out the reaction (3R)-3-[(carboxymethyl)amino]butanoate + holo-[ACP] + H(+) = (2E)-butenoyl-[ACP] + glycine + H2O. Functionally, involved in the biosynthesis of a unique class of isonitrile lipopeptides (INLPs). Catalyzes a Michael addition of glycine to the beta-position of an alpha,beta-unsaturated fatty acyl-[ACP], producing a (3R)-3-[(carboxymethyl)amino]fatty acid. Acts on the (2E)-butenoyl moiety loaded on the acyl-carrier protein ScoB, forming the product (3R)-3-[(carboxymethyl)amino]butanoate released from ScoB. The chain is (2E)-enoyl-[ACP] glycyltransferase from Streptomyces coeruleorubidus.